A 448-amino-acid polypeptide reads, in one-letter code: Ribulose bisphosphate carboxylase large chain (448 aa).

Residues 1-2 (MS) constitute a propeptide that is removed on maturation. P3 carries the N-acetylproline modification. Residue K14 is modified to N6,N6,N6-trimethyllysine. Substrate contacts are provided by N122 and T172. K174 functions as the Proton acceptor in the catalytic mechanism. K176 provides a ligand contact to substrate. Mg(2+)-binding residues include K200, D202, and E203. K200 is subject to N6-carboxylysine. H293 functions as the Proton acceptor in the catalytic mechanism. Substrate-binding residues include R294, H326, and S378.

This sequence belongs to the RuBisCO large chain family. Type I subfamily. Heterohexadecamer of 8 large chains and 8 small chains; disulfide-linked. The disulfide link is formed within the large subunit homodimers. Mg(2+) is required as a cofactor. The disulfide bond which can form in the large chain dimeric partners within the hexadecamer appears to be associated with oxidative stress and protein turnover.

The protein localises to the plastid. It localises to the chloroplast. It carries out the reaction 2 (2R)-3-phosphoglycerate + 2 H(+) = D-ribulose 1,5-bisphosphate + CO2 + H2O. The enzyme catalyses D-ribulose 1,5-bisphosphate + O2 = 2-phosphoglycolate + (2R)-3-phosphoglycerate + 2 H(+). Its function is as follows. RuBisCO catalyzes two reactions: the carboxylation of D-ribulose 1,5-bisphosphate, the primary event in carbon dioxide fixation, as well as the oxidative fragmentation of the pentose substrate in the photorespiration process. Both reactions occur simultaneously and in competition at the same active site. This Dichapetalum crassifolium protein is Ribulose bisphosphate carboxylase large chain.